Consider the following 364-residue polypeptide: Anionic peroxidase (364 aa).

An N-terminal signal peptide occupies residues Met1–Ala20. Residues Gly21–Gly66 constitute a propeptide that is removed on maturation. The active-site Proton acceptor is the His99. 4 residues coordinate Ca(2+): Asp100, Val103, Gly105, and Asp107. A disulfide bridge links Cys101 with Cys106. Residues Asn113, Asn188, Asn202, and Asn216 are each glycosylated (N-linked (GlcNAc...) asparagine). 2 disulfides stabilise this stretch: Cys155–Cys343 and Cys234–Cys255. His227 serves as a coordination point for heme b. Thr228 lines the Ca(2+) pocket. Asn254 and Asn260 each carry an N-linked (GlcNAc...) asparagine glycan. Positions 268, 270, and 275 each coordinate Ca(2+). An N-linked (GlcNAc...) asparagine glycan is attached at Asn299.

This sequence belongs to the peroxidase family. Classical plant (class III) peroxidase subfamily. Ca(2+) serves as cofactor. It depends on heme b as a cofactor. In terms of tissue distribution, highly expressed in suspension cultured cells and calli. Weak expression also found in the stems of intact plants. No expression in leaf, tuberous root and non-tuberous root.

The protein resides in the secreted. It carries out the reaction 2 a phenolic donor + H2O2 = 2 a phenolic radical donor + 2 H2O. In terms of biological role, removal of H(2)O(2), oxidation of toxic reductants, biosynthesis and degradation of lignin, suberization, auxin catabolism, response to environmental stresses such as wounding, pathogen attack and oxidative stress. These functions might be dependent on each isozyme/isoform in each plant tissue. Functionally, may contribute to protection against cold-induced oxidative stress. This is Anionic peroxidase from Ipomoea batatas (Sweet potato).